The chain runs to 24 residues: Attacin (24 aa).

It belongs to the attacin/sarcotoxin-2 family.

It localises to the secreted. Hemolymph antibacterial protein. The polypeptide is Attacin (Heliothis virescens (Tobacco budworm moth)).